A 601-amino-acid chain; its full sequence is Elongation factor 4 (601 aa).

One can recognise a tr-type G domain in the interval 7–189 (SHIRNFSIIA…SIVQLVPPPQ (183 aa)). GTP contacts are provided by residues 19-24 (DHGKST) and 136-139 (NKID).

This sequence belongs to the TRAFAC class translation factor GTPase superfamily. Classic translation factor GTPase family. LepA subfamily.

It localises to the cell inner membrane. The catalysed reaction is GTP + H2O = GDP + phosphate + H(+). Required for accurate and efficient protein synthesis under certain stress conditions. May act as a fidelity factor of the translation reaction, by catalyzing a one-codon backward translocation of tRNAs on improperly translocated ribosomes. Back-translocation proceeds from a post-translocation (POST) complex to a pre-translocation (PRE) complex, thus giving elongation factor G a second chance to translocate the tRNAs correctly. Binds to ribosomes in a GTP-dependent manner. The polypeptide is Elongation factor 4 (Trichodesmium erythraeum (strain IMS101)).